A 313-amino-acid polypeptide reads, in one-letter code: Olfactory receptor 1f45 (313 aa).

The Extracellular segment spans residues 1 to 25 (MSSTNQSSVTEFLLLGLSRQPQQQQ). An N-linked (GlcNAc...) asparagine glycan is attached at asparagine 5. A helical membrane pass occupies residues 26 to 50 (LLFLLFLIMYLATVLGNLLIILAIG). Topologically, residues 51 to 57 (TDSRLHT) are cytoplasmic. A helical transmembrane segment spans residues 58–79 (PMYFFLSNLSFVDVCFSSTTVP). The Extracellular portion of the chain corresponds to 80–100 (KVLANHILGSQAISFSGCLTQ). A disulfide bridge links cysteine 97 with cysteine 189. Residues 101-120 (LYFLAVFGNMDNFLLAVMSY) form a helical membrane-spanning segment. The Cytoplasmic segment spans residues 121–139 (DRFVAICHPLHYTTKMTRQ). Residues 140 to 158 (LCVLLVVGSWVVANMNCLL) form a helical membrane-spanning segment. The Extracellular segment spans residues 159-196 (HILLMARLSFCADNMIPHFFCDGTPLLKLSCSDTHLNE). Residues 197–219 (LMILTEGAVVMVTPFVCILISYI) form a helical membrane-spanning segment. Over 220-236 (HITCAVLRVSSPRGGWK) the chain is Cytoplasmic. A helical transmembrane segment spans residues 237 to 260 (SFSTCGSHLAVVCLFYGTVIAVYF). The Extracellular segment spans residues 261-272 (NPSSSHLAGRDM). Residues 273-292 (AAAVMYAVVTPMLNPFIYSL) form a helical membrane-spanning segment. The Cytoplasmic segment spans residues 293–313 (RNSDMKAALRKVLAMRFPSKQ).

Belongs to the G-protein coupled receptor 1 family. In terms of tissue distribution, olfactory epithelium.

It localises to the cell membrane. Odorant receptor. This is Olfactory receptor 1f45 (Or1f45) from Rattus norvegicus (Rat).